Reading from the N-terminus, the 137-residue chain is Large ribosomal subunit protein uL16 (137 aa).

The protein belongs to the universal ribosomal protein uL16 family. In terms of assembly, part of the 50S ribosomal subunit.

Its function is as follows. Binds 23S rRNA and is also seen to make contacts with the A and possibly P site tRNAs. In Streptococcus sanguinis (strain SK36), this protein is Large ribosomal subunit protein uL16.